We begin with the raw amino-acid sequence, 136 residues long: MARTKQTARKSTGGKAPRKQLATKAARKSAPSAGGVKKPHRYRPGTVALREIRRYQKSTELLIRKLPFQRLVREIAQDFKTDLRFQSSAVMALQESAEAYLVSLFEDTNLAAIHAKRVTIQPKDIALARRLRGERT.

A disordered region spans residues 1–42 (MARTKQTARKSTGGKAPRKQLATKAARKSAPSAGGVKKPHRY). N6,N6,N6-trimethyllysine; alternate is present on K5. K5 bears the N6,N6-dimethyllysine; alternate mark. N6-methyllysine; alternate is present on residues K5 and K10. An N6-acetyllysine; alternate modification is found at K10. Phosphoserine is present on S11. At K15 the chain carries N6,N6-dimethyllysine; alternate. Residues K15, K19, K24, K28, and K37 each carry the N6-acetyllysine; alternate modification. N6-methyllysine; alternate occurs at positions 19, 24, 28, and 37. N6,N6,N6-trimethyllysine; alternate occurs at positions 28 and 37. 2 positions are modified to N6,N6-dimethyllysine; alternate: K28 and K37. 2 positions are modified to N6-acetyllysine: K57 and K65. An N6,N6,N6-trimethyllysine; alternate modification is found at K80. An N6,N6-dimethyllysine; alternate modification is found at K80. An N6-methyllysine; alternate modification is found at K80.

This sequence belongs to the histone H3 family. As to quaternary structure, the nucleosome is a histone octamer containing two molecules each of H2A, H2B, H3 and H4 assembled in one H3-H4 heterotetramer and two H2A-H2B heterodimers. The octamer wraps approximately 147 bp of DNA. Phosphorylated to form H3S10ph. H3S10ph promotes subsequent H3K14ac formation and is required for transcriptional activation through TBP recruitment to the promoters. Post-translationally, mono-, di- and trimethylated by the COMPASS complex to form H3K4me1/2/3. H3K4me activates gene expression by regulating transcription elongation and plays a role in telomere length maintenance. H3K4me enrichment correlates with transcription levels, and occurs in a 5' to 3' gradient with H3K4me3 enrichment at the 5'-end of genes, shifting to H3K4me2 and then H3K4me1. Methylated by SET2 to form H3K36me. H3K36me represses gene expression. Methylated by DOT1 to form H3K79me. H3K79me is required for association of SIR proteins with telomeric regions and for telomeric silencing. The COMPASS-mediated formation of H3K4me2/3 and the DOT1-mediated formation of H3K79me require H2BK123ub1. In terms of processing, acetylation of histone H3 leads to transcriptional activation. H3K14ac formation by GCN5 is promoted by H3S10ph. H3K14ac can also be formed by ESA1. H3K56ac formation occurs predominantly in newly synthesized H3 molecules during G1, S and G2/M of the cell cycle and may be involved in DNA repair.

It localises to the nucleus. The protein resides in the chromosome. Functionally, core component of nucleosome. Nucleosomes wrap and compact DNA into chromatin, limiting DNA accessibility to the cellular machineries which require DNA as a template. Histones thereby play a central role in transcription regulation, DNA repair, DNA replication and chromosomal stability. DNA accessibility is regulated via a complex set of post-translational modifications of histones, also called histone code, and nucleosome remodeling. This Mycosarcoma maydis (Corn smut fungus) protein is Histone H3.2 (HHT2).